A 226-amino-acid chain; its full sequence is MKKPKVTTQKPKLTYRVNEQIRVPEVRVIFTDGTQKVMPTLEARRMAEERNQDLIEVQPNAAPPVCKFDNLGKLLYKMDKRDKDLKKKQKATTLKELRFHPNTDKHDFDFKTAHLEEFLRKGNRVRATIVFLGRSIIYKDKGLELAERLTERLSIVSNRDGDPKFEGKKLFVYFDPDKKKIDTYERIKAKTSQPFVPLAPLSPEDLIEEPELESESDSDAEPESDN.

A disordered region spans residues phenylalanine 195–asparagine 226. Acidic residues predominate over residues aspartate 205–asparagine 226.

It belongs to the IF-3 family. As to quaternary structure, monomer.

The protein resides in the cytoplasm. Functionally, IF-3 binds to the 30S ribosomal subunit and shifts the equilibrium between 70S ribosomes and their 50S and 30S subunits in favor of the free subunits, thus enhancing the availability of 30S subunits on which protein synthesis initiation begins. The chain is Translation initiation factor IF-3 from Chlorobium chlorochromatii (strain CaD3).